The primary structure comprises 119 residues: Membrane-anchored ubiquitin-fold protein 3 (119 aa).

The 69-residue stretch at 8–76 folds into the Ubiquitin-like domain; the sequence is IEVKFRLFDG…NNRTLAESRV (69 aa). A Cysteine methyl ester modification is found at C116. Residue C116 is the site of S-geranylgeranyl cysteine attachment. A propeptide spans 117–119 (removed in mature form); the sequence is TIL.

Its subcellular location is the cell membrane. In terms of biological role, may serve as docking site to facilitate the association of other proteins to the plasma membrane. The sequence is that of Membrane-anchored ubiquitin-fold protein 3 (MUB3) from Oryza sativa subsp. japonica (Rice).